The sequence spans 695 residues: DNA ligase (695 aa).

Position 30-34 (30-34) interacts with NAD(+); that stretch reads DADFD. The segment at 52–71 is disordered; it reads TGASPTEEVAPAPPTSSPFR. NAD(+) is bound by residues 81 to 82 and Glu106; that span reads SL. Lys108 acts as the N6-AMP-lysine intermediate in catalysis. Residues Arg129, Glu169, Lys285, and Lys309 each contribute to the NAD(+) site. Zn(2+) is bound by residues Cys403, Cys406, Cys422, and Cys428. One can recognise a BRCT domain in the interval 599-688; that stretch reads VDSALLEGLT…APSSGDDAST (90 aa). A disordered region spans residues 676–695; that stretch reads ENGAPSSGDDASTSADSVDD. Residues 679 to 695 are compositionally biased toward low complexity; it reads APSSGDDASTSADSVDD.

Belongs to the NAD-dependent DNA ligase family. LigA subfamily. Mg(2+) is required as a cofactor. Mn(2+) serves as cofactor.

The catalysed reaction is NAD(+) + (deoxyribonucleotide)n-3'-hydroxyl + 5'-phospho-(deoxyribonucleotide)m = (deoxyribonucleotide)n+m + AMP + beta-nicotinamide D-nucleotide.. In terms of biological role, DNA ligase that catalyzes the formation of phosphodiester linkages between 5'-phosphoryl and 3'-hydroxyl groups in double-stranded DNA using NAD as a coenzyme and as the energy source for the reaction. It is essential for DNA replication and repair of damaged DNA. This is DNA ligase from Corynebacterium jeikeium (strain K411).